The primary structure comprises 581 residues: NADH-quinone oxidoreductase subunit C/D (581 aa).

The NADH dehydrogenase I subunit C stretch occupies residues 1 to 172; it reads MSATDLVSEL…PLFNMTAALF (172 aa). The NADH dehydrogenase I subunit D stretch occupies residues 196–581; it reads ELMILNYGPH…IDYVMSDVDR (386 aa).

It in the N-terminal section; belongs to the complex I 30 kDa subunit family. The protein in the C-terminal section; belongs to the complex I 49 kDa subunit family. In terms of assembly, NDH-1 is composed of 13 different subunits. Subunits NuoB, CD, E, F, and G constitute the peripheral sector of the complex.

It is found in the cell inner membrane. It carries out the reaction a quinone + NADH + 5 H(+)(in) = a quinol + NAD(+) + 4 H(+)(out). Functionally, NDH-1 shuttles electrons from NADH, via FMN and iron-sulfur (Fe-S) centers, to quinones in the respiratory chain. The immediate electron acceptor for the enzyme in this species is believed to be ubiquinone. Couples the redox reaction to proton translocation (for every two electrons transferred, four hydrogen ions are translocated across the cytoplasmic membrane), and thus conserves the redox energy in a proton gradient. The protein is NADH-quinone oxidoreductase subunit C/D of Rhodopseudomonas palustris (strain HaA2).